We begin with the raw amino-acid sequence, 404 residues long: S-adenosylmethionine synthase (404 aa).

A compositionally biased stretch (polar residues) spans methionine 1–valine 13. Positions methionine 1 to lysine 20 are disordered. Histidine 17 is a binding site for ATP. Aspartate 19 is a binding site for Mg(2+). Glutamate 45 lines the K(+) pocket. Glutamate 58 and glutamine 101 together coordinate L-methionine. The interval glutamine 101–arginine 111 is flexible loop. ATP is bound by residues aspartate 172–lysine 174, arginine 245–phenylalanine 246, aspartate 254, arginine 260–lysine 261, alanine 277, and lysine 281. An L-methionine-binding site is contributed by aspartate 254. Lysine 285 lines the L-methionine pocket.

It belongs to the AdoMet synthase family. As to quaternary structure, homotetramer; dimer of dimers. Requires Mg(2+) as cofactor. K(+) is required as a cofactor.

It is found in the cytoplasm. It catalyses the reaction L-methionine + ATP + H2O = S-adenosyl-L-methionine + phosphate + diphosphate. Its pathway is amino-acid biosynthesis; S-adenosyl-L-methionine biosynthesis; S-adenosyl-L-methionine from L-methionine: step 1/1. Catalyzes the formation of S-adenosylmethionine (AdoMet) from methionine and ATP. The overall synthetic reaction is composed of two sequential steps, AdoMet formation and the subsequent tripolyphosphate hydrolysis which occurs prior to release of AdoMet from the enzyme. The chain is S-adenosylmethionine synthase from Chlorobium limicola (strain DSM 245 / NBRC 103803 / 6330).